Reading from the N-terminus, the 328-residue chain is Phenylalanine--tRNA ligase alpha subunit (328 aa).

Residue glutamate 245 coordinates Mg(2+).

Belongs to the class-II aminoacyl-tRNA synthetase family. Phe-tRNA synthetase alpha subunit type 1 subfamily. In terms of assembly, tetramer of two alpha and two beta subunits. Mg(2+) serves as cofactor.

It is found in the cytoplasm. It catalyses the reaction tRNA(Phe) + L-phenylalanine + ATP = L-phenylalanyl-tRNA(Phe) + AMP + diphosphate + H(+). The protein is Phenylalanine--tRNA ligase alpha subunit of Helicobacter pylori (strain P12).